The chain runs to 159 residues: Cyclin-dependent kinase inhibitor 1 (159 aa).

The residue at position 2 (S2) is an N-acetylserine. A Glycyl serine ester (Ser-Gly) (interchain with G-Cter in ubiquitin) cross-link involves residue S2. The segment at 12–40 (HRSKVCRCLFGPVDSEQLRRDCDALMAGC) adopts a C4-type zinc-finger fold. A required for binding cyclins region spans residues 17-24 (CRCLFGPV). Residues 53 to 58 (VTETPL) form a required for binding CDKs region. Residue S78 is modified to Phosphoserine; by NUAK1. Positions 78–106 (SPGSRSRDDLGGDKRPSTSSALLQGPAPE) are disordered. Over residues 82 to 93 (RSRDDLGGDKRP) the composition is skewed to basic and acidic residues. S112 bears the Phosphoserine; by GSK3-beta mark. Positions 118–142 (VSERPEDSPGGPGTSQGRKRRQTSL) are disordered. S125 carries the post-translational modification Phosphoserine. The PIP-box K+4 motif motif lies at 135–159 (RKRRQTSLTDFYHSKRRLVFCKRKP). Position 140 is a phosphothreonine; by PKA, PKB/AKT1, PIM1 and PIM2 (T140). Position 141 is a phosphoserine; by NUAK1 (S141). The interaction with TRIM39 stretch occupies residues 147–159 (HSKRRLVFCKRKP).

It belongs to the CDI family. Interacts with HDAC1; the interaction is prevented by competitive binding of C10orf90/FATS to HDAC1 facilitating acetylation and protein stabilization of CDKN1A/p21. Interacts with MKRN1. Interacts with PSMA3. Interacts with PCNA. Component of the ternary complex, cyclin D-CDK4-CDKN1A. Interacts (via its N-terminal domain) with CDK4; the interaction promotes the assembly of the cyclin D-CDK4 complex, its nuclear translocation and promotes the cyclin D-dependent enzyme activity of CDK4. Binding to CDK2 leads to CDK2/cyclin E inactivation at the G1-S phase DNA damage checkpoint, thereby arresting cells at the G1-S transition during DNA repair. Interacts with PIM1. Interacts with STK11. Interacts with NUAK1. Interacts with DTL and TRIM39. Interacts with PKP3; the interaction sequesters CDKN1A to the cytoplasm thereby repressing its role as an inhibitor of CDK4- and CDK6-driven RB1 phosphorylation. Post-translationally, phosphorylation of Thr-140 or Ser-141 impairs binding to PCNA. Phosphorylation at Ser-112 by GSK3-beta enhances ubiquitination by the DCX(DTL) complex. Phosphorylation of Thr-140 by PIM2 enhances its stability and inhibits cell proliferation. Phosphorylation of Thr-140 by PIM1 results in the relocation of CDKN1A to the cytoplasm and enhanced CDKN1A protein stability. UV radiation-induced phosphorylation at Ser-78 and Ser-141 by NUAK1 leads to its degradation. Ubiquitinated by MKRN1; leading to polyubiquitination and 26S proteasome-dependent degradation. Ubiquitinated by the DCX(DTL) complex, also named CRL4(CDT2) complex, leading to its degradation during S phase or following UV irradiation. Ubiquitination by the DCX(DTL) complex is essential to control replication licensing and is PCNA-dependent: interacts with PCNA via its PIP-box, while the presence of the containing the 'K+4' motif in the PIP box, recruit the DCX(DTL) complex, leading to its degradation. Ubiquitination at Ser-2 leads to degradation by the proteasome pathway. Ubiquitinated by RNF114; leading to proteasomal degradation. In terms of processing, acetylation leads to protein stability. Acetylated in vitro on Lys-136, Lys-149, Lys-156 and Lys-158. Deacetylation by HDAC1 is prevented by competitive binding of C10orf90/FATS to HDAC1. As to expression, expressed in keratinocytes (at protein level).

It is found in the cytoplasm. The protein localises to the nucleus. May be involved in p53/TP53 mediated inhibition of cellular proliferation in response to DNA damage. Binds to and inhibits cyclin-dependent kinase activity, preventing phosphorylation of critical cyclin-dependent kinase substrates and blocking cell cycle progression. Functions in the nuclear localization and assembly of cyclin D-CDK4 complex and promotes its kinase activity towards RB1. At higher stoichiometric ratios, inhibits the kinase activity of the cyclin D-CDK4 complex. Inhibits DNA synthesis by DNA polymerase delta by competing with POLD3 for PCNA binding. Plays an important role in controlling cell cycle progression and DNA damage-induced G2 arrest. Its function is as follows. Plays an important role in controlling cell cycle progression and DNA damage-induced G2 arrest. Involved in p53/TP53 mediated inhibition of cellular proliferation in response to DNA damage. Also involved in p53-independent DNA damage-induced G2 arrest mediated by CREB3L1 in astrocytes and osteoblasts. Binds to and inhibits cyclin-dependent kinase activity, preventing phosphorylation of critical cyclin-dependent kinase substrates and blocking cell cycle progression. Functions in the nuclear localization and assembly of cyclin D-CDK4 complex and promotes its kinase activity towards RB1. At higher stoichiometric ratios, inhibits the kinase activity of the cyclin D-CDK4 complex. Inhibits DNA synthesis by DNA polymerase delta by competing with POLD3 for PCNA binding. Negatively regulates the CDK4- and CDK6-driven phosphorylation of RB1 in keratinocytes, thereby resulting in the release of E2F1 and subsequent transcription of E2F1-driven G1/S phase promoting genes. The chain is Cyclin-dependent kinase inhibitor 1 (Cdkn1a) from Mus musculus (Mouse).